Here is a 417-residue protein sequence, read N- to C-terminus: Serine hydroxymethyltransferase (417 aa).

Residues Leu121 and 125–127 (GHL) contribute to the (6S)-5,6,7,8-tetrahydrofolate site. Lys229 carries the post-translational modification N6-(pyridoxal phosphate)lysine. Residue 355 to 357 (SPF) coordinates (6S)-5,6,7,8-tetrahydrofolate.

The protein belongs to the SHMT family. Homodimer. Pyridoxal 5'-phosphate serves as cofactor.

The protein localises to the cytoplasm. It catalyses the reaction (6R)-5,10-methylene-5,6,7,8-tetrahydrofolate + glycine + H2O = (6S)-5,6,7,8-tetrahydrofolate + L-serine. The protein operates within one-carbon metabolism; tetrahydrofolate interconversion. It functions in the pathway amino-acid biosynthesis; glycine biosynthesis; glycine from L-serine: step 1/1. Catalyzes the reversible interconversion of serine and glycine with tetrahydrofolate (THF) serving as the one-carbon carrier. This reaction serves as the major source of one-carbon groups required for the biosynthesis of purines, thymidylate, methionine, and other important biomolecules. Also exhibits THF-independent aldolase activity toward beta-hydroxyamino acids, producing glycine and aldehydes, via a retro-aldol mechanism. This is Serine hydroxymethyltransferase from Salmonella arizonae (strain ATCC BAA-731 / CDC346-86 / RSK2980).